The primary structure comprises 462 residues: Notoamide biosynthesis cluster protein O' (462 aa).

3 helical membrane-spanning segments follow: residues 16-36, 55-75, and 79-99; these read IFNV…WAAM, AVIF…IAKI, and WAFA…YCNV. Residue Asn102 is glycosylated (N-linked (GlcNAc...) asparagine). 4 consecutive transmembrane segments (helical) span residues 104-124, 143-163, 173-193, and 233-253; these read SWYI…FWLT, AYWL…TLGV, ISVQ…FVAA, and ILLL…FSTY. Asn254 is a glycosylation site (N-linked (GlcNAc...) asparagine). Transmembrane regions (helical) follow at residues 265–285, 297–317, 343–363, and 404–424; these read LSSL…GFFL, MAAF…AMVV, VYIL…WLIG, and AVAV…FVIY. Residues 443–462 form a disordered region; the sequence is LQTSGEGSHDIMDANGKSDD. Residues 449–462 are compositionally biased toward basic and acidic residues; the sequence is GSHDIMDANGKSDD.

This sequence belongs to the unc-93 family.

The protein localises to the membrane. Functionally, part of the gene cluster that mediates the biosynthesis of notoamide, a fungal indole alkaloid that belongs to a family of natural products containing a characteristic bicyclo[2.2.2]diazaoctane core. The first step of notoamide biosynthesis involves coupling of L-proline and L-tryptophan by the bimodular NRPS notE', to produce cyclo-L-tryptophan-L-proline called brevianamide F. The reverse prenyltransferase notF' then acts as a deoxybrevianamide E synthase and converts brevianamide F to deoxybrevianamide E via reverse prenylation at C-2 of the indole ring leading to the bicyclo[2.2.2]diazaoctane core. Deoxybrevianamide E is further hydroxylated at C-6 of the indole ring, likely catalyzed by the cytochrome P450 monooxygenase notG', to yield 6-hydroxy-deoxybrevianamide E. 6-hydroxy-deoxybrevianamide E is a specific substrate of the prenyltransferase notC' for normal prenylation at C-7 to produce 6-hydroxy-7-prenyl-deoxybrevianamide, also called notoamide S. As the proposed pivotal branching point in notoamide biosynthesis, notoamide S can be diverted to notoamide E through an oxidative pyran ring closure putatively catalyzed by either notH' cytochrome P450 monooxygenase or the notD' FAD-linked oxidoreductase. This step would be followed by an indole 2,3-epoxidation-initiated pinacol-like rearrangement catalyzed by the notB' FAD-dependent monooxygenase leading to the formation of notoamide C and notoamide D. On the other hand notoamide S is converted to notoamide T by notH' (or notD'), a bifunctional oxidase that also functions as the intramolecular Diels-Alderase responsible for generation of (-)-notoamide T. To generate antipodal (+)-notoaminide T, notH (or notD) in Aspergillus strain MF297-2 is expected to catalyze a Diels-Alder reaction leading to the opposite stereochemistry. The remaining oxidoreductase notD' (or notH') likely catalyzes the oxidative pyran ring formation to yield (-)-stephacidin A. The FAD-dependent monooxygenase notI' is highly similar to notB' and is predicted to catalyze a similar conversion from (-)-stephacidin A to (+)-notoamide B via the 2,3-epoxidation of (-)-stephacidin A followed by a pinacol-type rearrangement. Finally, it remains unclear which enzyme could be responsible for the final hydroxylation steps leading to notoamide A and sclerotiamide. The function of notO' in the notoamide biosynthesis has not been determined yet. This chain is Notoamide biosynthesis cluster protein O', found in Aspergillus versicolor.